A 584-amino-acid polypeptide reads, in one-letter code: Membrane protein insertase YidC (584 aa).

5 consecutive transmembrane segments (helical) span residues 5–25 (SVIG…FMAP), 358–378 (FIGN…LVTY), 428–448 (LGGC…FYVF), 478–498 (IPLY…AVFL), and 516–536 (IYIF…GLGL). Residues 563–584 (ALSPVVAAPPKAPKKKKNARKR) form a disordered region. Residues 574–584 (APKKKKNARKR) show a composition bias toward basic residues.

Belongs to the OXA1/ALB3/YidC family. Type 1 subfamily. In terms of assembly, interacts with the Sec translocase complex via SecD. Specifically interacts with transmembrane segments of nascent integral membrane proteins during membrane integration.

The protein resides in the cell inner membrane. Functionally, required for the insertion and/or proper folding and/or complex formation of integral membrane proteins into the membrane. Involved in integration of membrane proteins that insert both dependently and independently of the Sec translocase complex, as well as at least some lipoproteins. Aids folding of multispanning membrane proteins. The polypeptide is Membrane protein insertase YidC (Prosthecochloris aestuarii (strain DSM 271 / SK 413)).